A 432-amino-acid polypeptide reads, in one-letter code: Asparagine--tRNA ligase (432 aa).

This sequence belongs to the class-II aminoacyl-tRNA synthetase family. Homodimer.

The protein localises to the cytoplasm. The enzyme catalyses tRNA(Asn) + L-asparagine + ATP = L-asparaginyl-tRNA(Asn) + AMP + diphosphate + H(+). The chain is Asparagine--tRNA ligase from Lacticaseibacillus paracasei (strain ATCC 334 / BCRC 17002 / CCUG 31169 / CIP 107868 / KCTC 3260 / NRRL B-441) (Lactobacillus paracasei).